We begin with the raw amino-acid sequence, 62 residues long: UPF0434 protein NGR_c31900 (62 aa).

The protein belongs to the UPF0434 family.

The polypeptide is UPF0434 protein NGR_c31900 (Sinorhizobium fredii (strain NBRC 101917 / NGR234)).